A 278-amino-acid polypeptide reads, in one-letter code: uncharacterized protein (278 aa).

This is an uncharacterized protein from Schizosaccharomyces pombe (strain 972 / ATCC 24843) (Fission yeast).